The primary structure comprises 525 residues: Probable bifunctional tRNA threonylcarbamoyladenosine biosynthesis protein (525 aa).

A kae1 region spans residues Met-1–Trp-322. Fe cation is bound by residues His-106, His-110, and Tyr-127. L-threonylcarbamoyladenylate-binding positions include Tyr-127 to Ala-131, Asp-159, Gly-172, Glu-176, and Asn-255. Asp-283 is a binding site for Fe cation. Positions Ala-331–Leu-525 constitute a Protein kinase domain. ATP contacts are provided by residues Ala-338–Val-346 and Lys-355. Asp-442 (proton acceptor; for kinase activity) is an active-site residue.

It in the N-terminal section; belongs to the KAE1 / TsaD family. The protein in the C-terminal section; belongs to the protein kinase superfamily. Tyr protein kinase family. BUD32 subfamily. In terms of assembly, component of the KEOPS complex that consists of Kae1, Bud32, Cgi121 and Pcc1; the whole complex dimerizes. It depends on Fe(2+) as a cofactor.

It localises to the cytoplasm. It catalyses the reaction L-seryl-[protein] + ATP = O-phospho-L-seryl-[protein] + ADP + H(+). The enzyme catalyses L-threonyl-[protein] + ATP = O-phospho-L-threonyl-[protein] + ADP + H(+). It carries out the reaction L-threonylcarbamoyladenylate + adenosine(37) in tRNA = N(6)-L-threonylcarbamoyladenosine(37) in tRNA + AMP + H(+). Required for the formation of a threonylcarbamoyl group on adenosine at position 37 (t(6)A37) in tRNAs that read codons beginning with adenine. Is a component of the KEOPS complex that is probably involved in the transfer of the threonylcarbamoyl moiety of threonylcarbamoyl-AMP (TC-AMP) to the N6 group of A37. The Kae1 domain likely plays a direct catalytic role in this reaction. The Bud32 domain probably displays kinase activity that regulates Kae1 function. This Methanocorpusculum labreanum (strain ATCC 43576 / DSM 4855 / Z) protein is Probable bifunctional tRNA threonylcarbamoyladenosine biosynthesis protein.